The primary structure comprises 106 residues: Starvation responsive small protein A (106 aa).

Residues 15–32 (ILLVNAGLISAYGVRIIF) form a helical membrane-spanning segment.

It is found in the cell membrane. Involved in starvation response and aggregation stage of the life cycle. May be involved in fruiting body morphogenesis and spore formation. The sequence is that of Starvation responsive small protein A from Dictyostelium discoideum (Social amoeba).